Reading from the N-terminus, the 223-residue chain is DNA mismatch repair protein MutH (223 aa).

The protein belongs to the MutH family.

It localises to the cytoplasm. Sequence-specific endonuclease that cleaves unmethylated GATC sequences. It is involved in DNA mismatch repair. The protein is DNA mismatch repair protein MutH of Shewanella oneidensis (strain ATCC 700550 / JCM 31522 / CIP 106686 / LMG 19005 / NCIMB 14063 / MR-1).